A 119-amino-acid chain; its full sequence is Phytosulfokines 2 (119 aa).

The first 34 residues, 1-34 (MSTTRGVSSSSAAAALALLLLFALCFFSFHFAAA), serve as a signal peptide directing secretion. A propeptide spanning residues 35-109 (ARAVPRDEHQ…RRLLSDAHLD (75 aa)) is cleaved from the precursor. Residues Y110 and Y112 each carry the sulfotyrosine modification. Residues 115 to 119 (HKNKP) constitute a propeptide that is removed on maturation.

This sequence belongs to the phytosulfokine family. Sulfation is important for activity and for the binding to a putative membrane receptor. Post-translationally, PSK-alpha is produced by endopeptidase digestion. PSK-beta is produced from PSK-alpha by exopeptidase digestion.

Its subcellular location is the secreted. Its function is as follows. Promotes plant cell differentiation, organogenesis and somatic embryogenesis as well as cell proliferation. The protein is Phytosulfokines 2 (PSK2) of Oryza sativa subsp. japonica (Rice).